We begin with the raw amino-acid sequence, 319 residues long: Zinc finger protein C19B12.07c (319 aa).

The segment at 146–170 adopts a C2H2-type zinc-finger fold; that stretch reads FRCLCCHVPCKNKKLLREHMNNKRH.

Belongs to the ZNF277 family.

It localises to the nucleus. This chain is Zinc finger protein C19B12.07c, found in Schizosaccharomyces pombe (strain 972 / ATCC 24843) (Fission yeast).